The following is a 259-amino-acid chain: Phospholipase YtpA (259 aa).

The active-site Nucleophile is Ser-88. Residues Asp-206 and His-236 each act as charge relay system in the active site.

Belongs to the AB hydrolase superfamily.

The protein operates within antibiotic biosynthesis; bacilysocin biosynthesis. In terms of biological role, phospholipase involved in the biosynthesis of the antibiotic bacilysocin. It probably catalyzes the hydrolysis of the 2-sn-acyl moiety of phosphatidylglycerol to produce bacilysocin (lysophosphatidylglycerol). Is also able to catalyze the hydrolysis reaction of one acyl bond in phosphatidylcholine in vitro (actual cleavage point is unknown), resulting in lysophosphatidylcholine. In Bacillus subtilis (strain 168), this protein is Phospholipase YtpA (ytpA).